The primary structure comprises 267 residues: Phosphate import ATP-binding protein PstB 2 (267 aa).

One can recognise an ABC transporter domain in the interval 21 to 262 (LTTKDLHVYY…AKCQSTSDYV (242 aa)). Position 53 to 60 (53 to 60 (GPSGCGKS)) interacts with ATP.

Belongs to the ABC transporter superfamily. Phosphate importer (TC 3.A.1.7) family. In terms of assembly, the complex is composed of two ATP-binding proteins (PstB), two transmembrane proteins (PstC and PstA) and a solute-binding protein (PstS).

Its subcellular location is the cell membrane. It carries out the reaction phosphate(out) + ATP + H2O = ADP + 2 phosphate(in) + H(+). Part of the ABC transporter complex PstSACB involved in phosphate import. Responsible for energy coupling to the transport system. The polypeptide is Phosphate import ATP-binding protein PstB 2 (Streptococcus agalactiae serotype Ia (strain ATCC 27591 / A909 / CDC SS700)).